Consider the following 2506-residue polypeptide: Zinc finger protein 462 (2506 aa).

3 consecutive C2H2-type zinc fingers follow at residues 4 to 27, 108 to 131, and 162 to 185; these read LQCD…QDVH, FQCK…RKVH, and FSCQ…KMYH. Lysine 20 participates in a covalent cross-link: Glycyl lysine isopeptide (Lys-Gly) (interchain with G-Cter in SUMO1); alternate. Residue lysine 20 forms a Glycyl lysine isopeptide (Lys-Gly) (interchain with G-Cter in SUMO2); alternate linkage. The tract at residues 215-241 is interaction with PBX1; sequence PCKELPAEVVERSILESMVKPLTKSRG. Residues lysine 234 and lysine 271 each participate in a glycyl lysine isopeptide (Lys-Gly) (interchain with G-Cter in SUMO2) cross-link. Residues 280-299 form a disordered region; the sequence is QEGTNLPDVPNKSAPSPTSN. Serine 292 and serine 309 each carry an O-linked (GlcNAc6P) serine glycan. Residues lysine 337, lysine 347, and lysine 349 each participate in a glycyl lysine isopeptide (Lys-Gly) (interchain with G-Cter in SUMO2) cross-link. The tract at residues 337 to 356 is disordered; the sequence is KFSPMSYPQMKPKSPHNSGL. Phosphoserine is present on residues serine 350 and serine 354. Residue lysine 428 forms a Glycyl lysine isopeptide (Lys-Gly) (interchain with G-Cter in SUMO2) linkage. 2 consecutive C2H2-type zinc fingers follow at residues 439-462 and 470-492; these read FQCP…ENIH and YKCD…KQCH. Residue lysine 484 forms a Glycyl lysine isopeptide (Lys-Gly) (interchain with G-Cter in SUMO2) linkage. Positions 535 to 596 are disordered; the sequence is DPLQQQQPPQ…QPQPPTQAAP (62 aa). The segment covering 542–593 has biased composition (pro residues); the sequence is PPQPPPPPPPPPPSQPQPLQQPQPPQLQPPHQVPPQPQTQPPPTQQPQPPTQ. Residues 600 to 623 form a C2H2-type 6 zinc finger; that stretch reads YKCTMCNYSTTTLKGLRVHQQHKH. Residues lysine 631, lysine 657, and lysine 668 each participate in a glycyl lysine isopeptide (Lys-Gly) (interchain with G-Cter in SUMO2) cross-link. The segment at 636–661 is disordered; that stretch reads PSSLPLENETDSHPSSSNTVKKSQTS. A compositionally biased stretch (polar residues) spans 648–661; that stretch reads HPSSSNTVKKSQTS. Serine 688 carries the post-translational modification Phosphoserine. Glycyl lysine isopeptide (Lys-Gly) (interchain with G-Cter in SUMO2) cross-links involve residues lysine 706 and aspartate 849. C2H2-type zinc fingers lie at residues 843-866, 886-908, and 925-948; these read YYCK…QRMH, YRCL…YGEH, and YRCR…QRMH. A Glycyl lysine isopeptide (Lys-Gly) (interchain with G-Cter in SUMO2) cross-link involves residue lysine 986. The C2H2-type 10 zinc finger occupies 1030-1053; that stretch reads YDCDVCSFASPNMHSVLVHYQKKH. The residue at position 1090 (serine 1090) is a Phosphoserine. Residue lysine 1135 forms a Glycyl lysine isopeptide (Lys-Gly) (interchain with G-Cter in SUMO2) linkage. The tract at residues 1157-1186 is disordered; sequence MRGVEGPQGSPRPPAPIQQLNRSSSERDGP. A Phosphoserine modification is found at serine 1166. Residues lysine 1206, lysine 1214, lysine 1220, and lysine 1243 each participate in a glycyl lysine isopeptide (Lys-Gly) (interchain with G-Cter in SUMO2) cross-link. 2 consecutive C2H2-type zinc fingers follow at residues 1265 to 1288 and 1470 to 1493; these read LKCR…KKDH and YQCT…GKKH. A Glycyl lysine isopeptide (Lys-Gly) (interchain with G-Cter in SUMO2) cross-link involves residue lysine 1499. Residues 1515–1538 form a C2H2-type 13 zinc finger; sequence YKCRHCPYINTRIHGVLTHYQKRH. Residues lysine 1571 and lysine 1591 each participate in a glycyl lysine isopeptide (Lys-Gly) (interchain with G-Cter in SUMO2) cross-link. 3 C2H2-type zinc fingers span residues 1577 to 1600, 1660 to 1683, and 1697 to 1720; these read YRCK…EKYH, FRCQ…RIKH, and FKCA…QKRH. Residues lysine 1698 and lysine 1780 each participate in a glycyl lysine isopeptide (Lys-Gly) (interchain with G-Cter in SUMO2) cross-link. The segment at 1892–1914 adopts a C2H2-type 17 zinc-finger fold; sequence YQCKHCDSKLQSTAELTSHLNIH. A Glycyl lysine isopeptide (Lys-Gly) (interchain with G-Cter in SUMO2) cross-link involves residue lysine 1946. The C2H2-type 18; degenerate zinc finger occupies 1968–1992; that stretch reads YKCKFCVEVHPTLRAICNHLRKHVQ. Lysine 2004 is subject to N6-methyllysine. 3 C2H2-type zinc fingers span residues 2025–2048, 2054–2077, and 2083–2106; these read YSCQ…QTHH, FRCK…LKAH, and YKCS…LKVH. Lysine 2104 participates in a covalent cross-link: Glycyl lysine isopeptide (Lys-Gly) (interchain with G-Cter in SUMO2). Residues 2122–2152 are disordered; that stretch reads SSHSHHSSQKATPAEEVEDSNDSSYSEPPDV. Over residues 2143 to 2152 the composition is skewed to polar residues; sequence DSSYSEPPDV. 2 positions are modified to phosphoserine: serine 2172 and serine 2177. 3 consecutive C2H2-type zinc fingers follow at residues 2191–2214, 2220–2243, and 2254–2276; these read LHCE…RDKH, FKCK…EAGH, and LRCP…IVLH. Lysine 2293 participates in a covalent cross-link: Glycyl lysine isopeptide (Lys-Gly) (interchain with G-Cter in SUMO2). 2 C2H2-type zinc fingers span residues 2300–2322 and 2328–2351; these read FRCD…IEKH and YKCQ…RDEH. The tract at residues 2371–2396 is disordered; the sequence is MKEKMESSSSDDEDKEEEMNSKAEDR. The C2H2-type 27 zinc finger occupies 2414-2436; it reads FPCEFCGRAFSQGSEWERHVLRH. Residues lysine 2444 and lysine 2504 each participate in a glycyl lysine isopeptide (Lys-Gly) (interchain with G-Cter in SUMO2) cross-link.

As to quaternary structure, interacts with PBX1; this interaction prevents PBX1-HOXA9 heterodimer from forming and binding to DNA. O-GlcNAcylated with O-GlcNAc-6-phosphate.

It localises to the nucleus. Its function is as follows. Zinc finger nuclear factor involved in transcription by regulating chromatin structure and organization. Involved in the pluripotency and differentiation of embryonic stem cells by regulating SOX2, POU5F1/OCT4, and NANOG. By binding PBX1, prevents the heterodimerization of PBX1 and HOXA9 and their binding to DNA. Regulates neuronal development and neural cell differentiation. The sequence is that of Zinc finger protein 462 from Homo sapiens (Human).